A 359-amino-acid polypeptide reads, in one-letter code: Phosphoserine aminotransferase (359 aa).

Residue Arg-42 coordinates L-glutamate. Residues 76 to 77 (AS), Trp-102, Thr-152, Asp-171, and Gln-194 contribute to the pyridoxal 5'-phosphate site. Lys-195 carries the N6-(pyridoxal phosphate)lysine modification. 236 to 237 (NT) serves as a coordination point for pyridoxal 5'-phosphate.

It belongs to the class-V pyridoxal-phosphate-dependent aminotransferase family. SerC subfamily. Homodimer. The cofactor is pyridoxal 5'-phosphate.

Its subcellular location is the cytoplasm. The enzyme catalyses O-phospho-L-serine + 2-oxoglutarate = 3-phosphooxypyruvate + L-glutamate. It catalyses the reaction 4-(phosphooxy)-L-threonine + 2-oxoglutarate = (R)-3-hydroxy-2-oxo-4-phosphooxybutanoate + L-glutamate. Its pathway is amino-acid biosynthesis; L-serine biosynthesis; L-serine from 3-phospho-D-glycerate: step 2/3. It functions in the pathway cofactor biosynthesis; pyridoxine 5'-phosphate biosynthesis; pyridoxine 5'-phosphate from D-erythrose 4-phosphate: step 3/5. In terms of biological role, catalyzes the reversible conversion of 3-phosphohydroxypyruvate to phosphoserine and of 3-hydroxy-2-oxo-4-phosphonooxybutanoate to phosphohydroxythreonine. The chain is Phosphoserine aminotransferase from Vesicomyosocius okutanii subsp. Calyptogena okutanii (strain HA).